We begin with the raw amino-acid sequence, 506 residues long: MAP kinase kinase MKK2/SSP33 (506 aa).

The tract at residues 1-69 (MASMFRPPES…TSTTSSMASN (69 aa)) is disordered. Residues 26 to 52 (LVQNAKSTNDGQHLNRSPYSSVNESPY) are compositionally biased toward polar residues. Residues 53-69 (SNNSTSATSTTSSMASN) show a composition bias toward low complexity. One can recognise a Protein kinase domain in the interval 214 to 481 (ITTLGILGEG…PRQMLKHPWI (268 aa)). ATP is bound by residues 220-228 (LGEGAGGSV) and lysine 243. Aspartate 342 (proton acceptor) is an active-site residue.

This sequence belongs to the protein kinase superfamily. STE Ser/Thr protein kinase family. MAP kinase kinase subfamily.

The enzyme catalyses L-seryl-[protein] + ATP = O-phospho-L-seryl-[protein] + ADP + H(+). It catalyses the reaction L-threonyl-[protein] + ATP = O-phospho-L-threonyl-[protein] + ADP + H(+). The catalysed reaction is L-tyrosyl-[protein] + ATP = O-phospho-L-tyrosyl-[protein] + ADP + H(+). Functionally, serine/threonine protein kinase involved in a signal transduction pathway that plays a role in yeast cell morphogenesis and cell growth. This pathway seems to start by SMP3; then involves the kinase PKC1 that may act on the BCK1 kinase that then phosphorylates MKK1 and MKK2 which themselves phosphorylate the MPK1 kinase. The protein is MAP kinase kinase MKK2/SSP33 (MKK2) of Saccharomyces cerevisiae (strain ATCC 204508 / S288c) (Baker's yeast).